The primary structure comprises 142 residues: MAYNQEDSKRLSDKYKKEGHFDKLKREILSNPWNNTEENSESFEQALRKRVASTVKEMVNEDEELIFKNRGLTSALIESQLVKDNYLKLGSKMEGDNGDGEKKFDLDVYVRSKLQDPKLLEMIKGQLQETLNSYEEEANGST.

Belongs to the SHG1 family. Component of the Set1C/COMPASS complex which consists of SET1(2), BRE2(2), SPP1(2), SDC1(1), SHG1(1), SWD1(1), SWD2(1), and SWD3(1).

The protein resides in the nucleus. Functionally, the COMPASS (Set1C) complex specifically mono-, di- and trimethylates histone H3 to form H3K4me1/2/3, which subsequently plays a role in telomere length maintenance and transcription elongation regulation. This is COMPASS component SHG1 (SHG1) from Saccharomyces cerevisiae (strain ATCC 204508 / S288c) (Baker's yeast).